Reading from the N-terminus, the 260-residue chain is Adenosylcobinamide-GDP ribazoletransferase (260 aa).

Helical transmembrane passes span 43–63, 64–84, 117–137, 143–163, 197–217, and 237–257; these read LVGT…QFIF, PASV…GGFH, GSLA…ELAL, VAGG…SIIF, VICL…TLFV, and TLGA…LLLW.

This sequence belongs to the CobS family. Mg(2+) serves as cofactor.

Its subcellular location is the cell inner membrane. It carries out the reaction alpha-ribazole + adenosylcob(III)inamide-GDP = adenosylcob(III)alamin + GMP + H(+). The catalysed reaction is alpha-ribazole 5'-phosphate + adenosylcob(III)inamide-GDP = adenosylcob(III)alamin 5'-phosphate + GMP + H(+). Its pathway is cofactor biosynthesis; adenosylcobalamin biosynthesis; adenosylcobalamin from cob(II)yrinate a,c-diamide: step 7/7. In terms of biological role, joins adenosylcobinamide-GDP and alpha-ribazole to generate adenosylcobalamin (Ado-cobalamin). Also synthesizes adenosylcobalamin 5'-phosphate from adenosylcobinamide-GDP and alpha-ribazole 5'-phosphate. This chain is Adenosylcobinamide-GDP ribazoletransferase, found in Shewanella amazonensis (strain ATCC BAA-1098 / SB2B).